Consider the following 75-residue polypeptide: uncharacterized protein (75 aa).

The segment at 43 to 67 (CSECGLPIPTTRLRANPFAHRCVSC) adopts a dksA C4-type zinc-finger fold.

This is an uncharacterized protein from Haemophilus influenzae (strain ATCC 51907 / DSM 11121 / KW20 / Rd).